Consider the following 508-residue polypeptide: Photosystem II CP47 reaction center protein (508 aa).

6 helical membrane-spanning segments follow: residues 21 to 36, 101 to 115, 140 to 156, 203 to 218, 237 to 252, and 457 to 472; these read SVHIMHTALVAGWAGS, IVFSGLCFLAAIWHW, GIHLFLSGVACFGFGAF, IAAGTLGILAGLFHLS, VLSSSIAAVFFAAFVV, and SFALLFFFGHIWHGAR.

The protein belongs to the PsbB/PsbC family. PsbB subfamily. As to quaternary structure, PSII is composed of 1 copy each of membrane proteins PsbA, PsbB, PsbC, PsbD, PsbE, PsbF, PsbH, PsbI, PsbJ, PsbK, PsbL, PsbM, PsbT, PsbX, PsbY, PsbZ, Psb30/Ycf12, at least 3 peripheral proteins of the oxygen-evolving complex and a large number of cofactors. It forms dimeric complexes. It depends on Binds multiple chlorophylls. PSII binds additional chlorophylls, carotenoids and specific lipids. as a cofactor.

It is found in the plastid. It localises to the chloroplast thylakoid membrane. Its function is as follows. One of the components of the core complex of photosystem II (PSII). It binds chlorophyll and helps catalyze the primary light-induced photochemical processes of PSII. PSII is a light-driven water:plastoquinone oxidoreductase, using light energy to abstract electrons from H(2)O, generating O(2) and a proton gradient subsequently used for ATP formation. The protein is Photosystem II CP47 reaction center protein of Atropa belladonna (Belladonna).